We begin with the raw amino-acid sequence, 126 residues long: Histone H2B-alpha (126 aa).

The disordered stretch occupies residues 1–34 (MSAAEKKPASKAPAGKAPRDTMKSADKKRGKNRK). N6-acetyllysine; alternate occurs at positions 6 and 7. Residues K6 and K7 each participate in a glycyl lysine isopeptide (Lys-Gly) (interchain with G-Cter in SUMO); alternate cross-link. A Phosphoserine modification is found at S10. K11 carries the N6-acetyllysine modification. Residues 17–27 (APRDTMKSADK) are compositionally biased toward basic and acidic residues. K120 is covalently cross-linked (Glycyl lysine isopeptide (Lys-Gly) (interchain with G-Cter in ubiquitin)).

It belongs to the histone H2B family. As to quaternary structure, the nucleosome is a histone octamer containing two molecules each of H2A, H2B, H3 and H4 assembled in one H3-H4 heterotetramer and two H2A-H2B heterodimers. The octamer wraps approximately 147 bp of DNA. Interacts with rik1. Post-translationally, monoubiquitinated by the rhp6/ubc2-bre1 complex to form H2BK123ub1. H2BK123ub1 gives a specific tag for epigenetic transcriptional activation and is also prerequisite for H3K4me and H3K79me formation. H2BK123ub1 also modulates the formation of double-strand breaks during meiosis and is a prerequisite for DNA-damage checkpoint activation. In terms of processing, phosphorylated by shk1 to form H2BS10ph during progression through meiotic prophase. May be correlated with chromosome condensation. Acetylation of N-terminal lysines and particularly formation of H2BK11ac has a positive effect on transcription. Post-translationally, sumoylation to form H2BK6su or H2BK7su occurs preferentially near the telomeres and represses gene transcription.

Its subcellular location is the nucleus. It localises to the chromosome. Core component of nucleosome. Nucleosomes wrap and compact DNA into chromatin, limiting DNA accessibility to the cellular machineries which require DNA as a template. Histones thereby play a central role in transcription regulation, DNA repair, DNA replication and chromosomal stability. DNA accessibility is regulated via a complex set of post-translational modifications of histones, also called histone code, and nucleosome remodeling. This chain is Histone H2B-alpha (htb1), found in Schizosaccharomyces pombe (strain 972 / ATCC 24843) (Fission yeast).